Here is a 285-residue protein sequence, read N- to C-terminus: tRNA-cytidine(32) 2-sulfurtransferase (285 aa).

A PP-loop motif motif is present at residues 48 to 53 (SGGKDS). [4Fe-4S] cluster is bound by residues Cys122, Cys125, and Cys213.

This sequence belongs to the TtcA family. As to quaternary structure, homodimer. The cofactor is Mg(2+). [4Fe-4S] cluster is required as a cofactor.

Its subcellular location is the cytoplasm. The catalysed reaction is cytidine(32) in tRNA + S-sulfanyl-L-cysteinyl-[cysteine desulfurase] + AH2 + ATP = 2-thiocytidine(32) in tRNA + L-cysteinyl-[cysteine desulfurase] + A + AMP + diphosphate + H(+). It functions in the pathway tRNA modification. Its function is as follows. Catalyzes the ATP-dependent 2-thiolation of cytidine in position 32 of tRNA, to form 2-thiocytidine (s(2)C32). The sulfur atoms are provided by the cysteine/cysteine desulfurase (IscS) system. This chain is tRNA-cytidine(32) 2-sulfurtransferase, found in Cytophaga hutchinsonii (strain ATCC 33406 / DSM 1761 / CIP 103989 / NBRC 15051 / NCIMB 9469 / D465).